The sequence spans 396 residues: THAP domain-containing protein 5 (396 aa).

The segment at 2–85 (MPRYCAAICC…LKQTAVPTIF (84 aa)) adopts a THAP-type zinc-finger fold. Positions 86–113 (SLPEDNQGKDPSKKKSQKKNLEDEKEVC) are disordered. Basic and acidic residues predominate over residues 91-113 (NQGKDPSKKKSQKKNLEDEKEVC). The short motif at 322–325 (EHSY) is the HCFC1-binding motif (HBM) element. The stretch at 349-382 (LELKEQQTLGRLKSLEALVRQLKQENWLSEENVK) forms a coiled coil.

In terms of assembly, interacts with HTRA2; under apoptotic conditions. Interacts with ABRAXAS2. Post-translationally, cleaved by HTRA2 during apoptosis.

Its subcellular location is the nucleus. Its function is as follows. Has sequence-specific DNA-binding activity and can function as transcriptional repressor (in vitro). May be a regulator of cell cycle: THAP5 overexpression in human cell lines causes cell cycle arrest at G2/M phase. This chain is THAP domain-containing protein 5 (THAP5), found in Macaca fascicularis (Crab-eating macaque).